The following is a 375-amino-acid chain: Hydrogenase-1 small chain (375 aa).

The tat-type signal signal peptide spans methionine 1–alanine 47. [4Fe-4S] cluster is bound by residues cysteine 64, cysteine 67, cysteine 162, cysteine 196, histidine 234, cysteine 237, cysteine 262, and cysteine 268. [3Fe-4S] cluster contacts are provided by cysteine 277, cysteine 296, and cysteine 299. Residues histidine 353–alanine 375 form a disordered region.

Belongs to the [NiFe]/[NiFeSe] hydrogenase small subunit family. Heterodimer of a large and a small subunit. Requires [4Fe-4S] cluster as cofactor. [3Fe-4S] cluster serves as cofactor. Post-translationally, predicted to be exported by the Tat system. The position of the signal peptide cleavage has not been experimentally proven.

The protein resides in the cell membrane. The enzyme catalyses H2 + A = AH2. This is Hydrogenase-1 small chain (hyaA) from Citrobacter freundii.